We begin with the raw amino-acid sequence, 443 residues long: Xaa-Pro dipeptidase (443 aa).

Positions 246, 257, 339, 384, and 423 each coordinate Mn(2+).

It belongs to the peptidase M24B family. Bacterial-type prolidase subfamily. Mn(2+) is required as a cofactor.

It carries out the reaction Xaa-L-Pro dipeptide + H2O = an L-alpha-amino acid + L-proline. In terms of biological role, splits dipeptides with a prolyl residue in the C-terminal position. The sequence is that of Xaa-Pro dipeptidase from Erwinia tasmaniensis (strain DSM 17950 / CFBP 7177 / CIP 109463 / NCPPB 4357 / Et1/99).